A 110-amino-acid chain; its full sequence is uncharacterized protein (110 aa).

Helical transmembrane passes span 32-52 (VLNV…ALVP), 57-77 (YTHM…CICI), and 90-110 (FLAS…TFVI).

The protein localises to the membrane. May play a role in proper chromosome segregation. Suppresses the high-frequency loss of mini-chromosomes when overexpressed, and this suppression is completely dependent on silencing protein SIR4. This is an uncharacterized protein from Saccharomyces cerevisiae (strain ATCC 204508 / S288c) (Baker's yeast).